The following is a 319-amino-acid chain: Lipopolysaccharide heptosyltransferase 1 (319 aa).

ADP-L-glycero-beta-D-manno-heptose-binding residues include threonine 187, threonine 188, lysine 192, glutamate 222, methionine 242, aspartate 261, threonine 262, glycine 263, and histidine 266.

This sequence belongs to the glycosyltransferase 9 family.

It localises to the cell inner membrane. The enzyme catalyses an alpha-Kdo-(2-&gt;4)-alpha-Kdo-(2-&gt;6)-lipid A + ADP-L-glycero-beta-D-manno-heptose = an L-alpha-D-Hep-(1-&gt;5)-[alpha-Kdo-(2-&gt;4)]-alpha-Kdo-(2-&gt;6)-lipid A + ADP + H(+). It carries out the reaction alpha-Kdo-(2-&gt;4)-alpha-Kdo-(2-&gt;6)-lipid A (E. coli) + ADP-L-glycero-beta-D-manno-heptose = L-alpha-D-Hep-(1-&gt;5)-[alpha-Kdo-(2-&gt;4)]-alpha-Kdo-(2-&gt;6)-lipid A (E. coli) + ADP + H(+). It participates in bacterial outer membrane biogenesis; LPS core biosynthesis. Functionally, glycosyltransferase involved in the biosynthesis of the core oligosaccharide region of lipopolysaccharide (LPS). Catalyzes the addition of the first heptose unit to one 3-deoxy-D-manno-octulosonic acid (Kdo) residue of the Kdo2-lipid A module. The analog ADP-mannose can serve as an alternative donor in place of ADP-L-glycero-D-manno-heptose for the glycosylation of Kdo2-lipid A. Displays no activity with ADP-glucose, GDP-mannose, UDP-glucose or UDP-galactose. The polypeptide is Lipopolysaccharide heptosyltransferase 1 (Escherichia coli (strain K12)).